A 175-amino-acid chain; its full sequence is Anterior gradient protein 2 homolog (175 aa).

An N-terminal signal peptide occupies residues 1-20 (MEKFSVSAILLLVAISGTLA). Residues 21–40 (KDTTVKSGAKKDPKDSRPKL) form a required to promote cell adhesion region. Positions 24–44 (TVKSGAKKDPKDSRPKLPQTL) are disordered. A compositionally biased stretch (basic and acidic residues) spans 29-38 (AKKDPKDSRP). Short sequence motifs (homodimer stabilization; interchain) lie at residues 45-54 (SRGWGDQLIW) and 60-67 (EALYRSKT).

Belongs to the AGR family. As to quaternary structure, monomer and homodimer. Interacts with LYPD3 and DAG1 (alphaDAG1). Interacts with MUC2; disulfide-linked. Expressed in lung, skeletal muscle, testis, liver, stomach, colon, small intestine, the goblet cells of the intestine and the mucuous neck cells of the stomach.

It is found in the secreted. It localises to the endoplasmic reticulum. Functionally, required for MUC2 post-transcriptional synthesis and secretion. May play a role in the production of mucus by intestinal cells. Proto-oncogene that may play a role in cell migration, cell differentiation and cell growth. Promotes cell adhesion. The polypeptide is Anterior gradient protein 2 homolog (Agr2) (Mus musculus (Mouse)).